The sequence spans 118 residues: Large ribosomal subunit protein uL24 (118 aa).

This sequence belongs to the universal ribosomal protein uL24 family. In terms of assembly, part of the 50S ribosomal subunit.

Functionally, one of two assembly initiator proteins, it binds directly to the 5'-end of the 23S rRNA, where it nucleates assembly of the 50S subunit. Its function is as follows. One of the proteins that surrounds the polypeptide exit tunnel on the outside of the subunit. This is Large ribosomal subunit protein uL24 from Prochlorococcus marinus (strain MIT 9215).